The primary structure comprises 310 residues: Ribosomal RNA small subunit methyltransferase H (310 aa).

S-adenosyl-L-methionine-binding positions include glycine 32–histidine 34, aspartate 52, phenylalanine 79, aspartate 100, and glutamine 107.

The protein belongs to the methyltransferase superfamily. RsmH family.

The protein resides in the cytoplasm. It catalyses the reaction cytidine(1402) in 16S rRNA + S-adenosyl-L-methionine = N(4)-methylcytidine(1402) in 16S rRNA + S-adenosyl-L-homocysteine + H(+). In terms of biological role, specifically methylates the N4 position of cytidine in position 1402 (C1402) of 16S rRNA. This chain is Ribosomal RNA small subunit methyltransferase H, found in Bacillus cereus (strain AH187).